The chain runs to 430 residues: N-lysine methyltransferase SMYD2-A (430 aa).

Positions 5-239 (EGLERFDSPG…AGDEVFTSYI (235 aa)) constitute an SET domain. 15-17 (KGR) provides a ligand contact to S-adenosyl-L-methionine. Positions 50, 53, 63, 66, 72, 76, 84, and 88 each coordinate Zn(2+). The MYND-type zinc-finger motif lies at 50–88 (CDFCFARKEGLSKCGKCKQAFYCNVDCQKGDWPMHKLEC). S-adenosyl-L-methionine is bound by residues His-135, 204–205 (NH), and 256–258 (YFF).

The protein belongs to the class V-like SAM-binding methyltransferase superfamily.

The protein localises to the cytoplasm. It is found in the cytosol. Its subcellular location is the nucleus. It carries out the reaction L-lysyl(4)-[histone H3] + 3 S-adenosyl-L-methionine = N(6),N(6),N(6)-trimethyl-L-lysyl(4)-[histone H3] + 3 S-adenosyl-L-homocysteine + 3 H(+). The enzyme catalyses L-lysyl-[protein] + S-adenosyl-L-methionine = N(6)-methyl-L-lysyl-[protein] + S-adenosyl-L-homocysteine + H(+). In terms of biological role, protein-lysine N-methyltransferase that methylates both histones and non-histone proteins, including p53/TP53 and RB1. Specifically trimethylates histone H3 'Lys-4' (H3K4me3) in vivo. The activity requires interaction with HSP90alpha. Shows even higher methyltransferase activity on p53/TP53. Monomethylates 'Lys-370' of p53/TP53, leading to decreased DNA-binding activity and subsequent transcriptional regulation activity of p53/TP53. Monomethylates RB1 at 'Lys-860'. This is N-lysine methyltransferase SMYD2-A (smyd2-a) from Xenopus laevis (African clawed frog).